A 268-amino-acid chain; its full sequence is Diaminopimelate epimerase (268 aa).

Positions 13, 46, and 64 each coordinate substrate. The Proton donor role is filled by C73. Substrate-binding positions include 74–75 (GN), N148, N181, and 199–200 (ER). C208 serves as the catalytic Proton acceptor. A substrate-binding site is contributed by 209 to 210 (GT).

This sequence belongs to the diaminopimelate epimerase family. As to quaternary structure, homodimer.

It localises to the cytoplasm. The enzyme catalyses (2S,6S)-2,6-diaminopimelate = meso-2,6-diaminopimelate. Its pathway is amino-acid biosynthesis; L-lysine biosynthesis via DAP pathway; DL-2,6-diaminopimelate from LL-2,6-diaminopimelate: step 1/1. Functionally, catalyzes the stereoinversion of LL-2,6-diaminopimelate (L,L-DAP) to meso-diaminopimelate (meso-DAP), a precursor of L-lysine and an essential component of the bacterial peptidoglycan. In Sphingopyxis alaskensis (strain DSM 13593 / LMG 18877 / RB2256) (Sphingomonas alaskensis), this protein is Diaminopimelate epimerase.